The primary structure comprises 1214 residues: MVNPLDSVNPSHALFEGFVQAQTCKETQQNFTELCRHLQVDPKDYKHFYSKLKDRLNYWKAKDLWQKIDKRAAHPDYDQGKACHQNKCLVLGAGPCGLRTAIELALLGAQVVVLEKRSSFTRNNVLHLWPFTIKDLLNLGAKKFYGRFCSGSIHHISIRQLQLILLKVALFLGVEVHTGVAFEGLNEPSGSAGWRANVSPKSHPVADFQFDVFISAGGGKYVPDGFKIKELRGKLAIGITANFVNRHTKQEAQVQEISGVARIYNQQFFQALQSEIGVDLENIVYYKDDTHYFVMTAKKASLLKKGVIKQDFSDADKLLAPSNVNQEALQDYAFEACDFSTEHLLPNLEFAKNHKGQADVAMFDFTCMQRAESASLVKERNGKRLLIGLVGDSLVEPFWPLGTGIARGFLGAFDAAWMVRSWGKGVQPMEVLAERESVYQLLSQTTPENTSKNYMAYSIDPSTRYPNINLSSIKPRQVKRLYEAEEQESKPNKLKKPDIKAKPRKDSMKRLEELLSWCQKNTVGYEHVKVKDLSESWRSGLALCALIHSFRPELVDMSALDEYNIIKNNKLAFDLMEKEFGITPIMRPGDMMTCGKIDQLSMVVYLTQIRNALTEKDTPAAQSNTLSLSRKRSAVAFLNTLKRNSLQRHKDRLASVKGPRQQNMKEKEEKKDVKEESLSSETSACEPCYFCKKHLYVVERESAEGKFFHRSCFNCFQCGSTLRQGGYSFHSDNGRFYCELHSLAEEEEGDEGHGGAQNHTENGSKEDKNGETTAASSPPAHLSIKRKGSYKISVDPDFDESTEFPAPDQDEPPDLEESHQPPKPSELSAENTNMENQQHNINPVPAPRGSRAPLPKPRTVHNVVHEPCNIPEEAEQIPEEPKPKPSLRKLQQSEEEKVDLLSQDSDSETRGSSSAASTSSSSKQHEEEGYWSGGTTWGKSHREQRNRPCIRRKSEPPLPLTGHSQHGKMRSKFSPWNLSSPRLQQRFSVHRVPAGQSQPDQYVSEDDNEDDEDEDEEDLQAEHYLDCEGADFEFSDSEKRNLKRMKTLERKAKMTEIQRFHKAQSIQRRLEEIEVTFKELEEKGVELERALRGETGTGDPEIIDQWIELVQEKNNLLSEESDLMVASRQLELEDKQSMLEMELRRYMEMDDSEKSPEQQKHEAEILQEMLDVVDMRDSLVAFLEEKRLKEVNDQFNSSLDAKRRSTTASQVHWE.

The interval 1–488 is monooxygenase domain; the sequence is MVNPLDSVNP…KRLYEAEEQE (488 aa). FAD is bound by residues Cys96, 115–117, 122–124, Phe182, Tyr292, and Asp392; these read EKR and RNN. The segment at 484-505 is disordered; that stretch reads AEEQESKPNKLKKPDIKAKPRK. The region spanning 508–614 is the Calponin-homology (CH) domain; sequence MKRLEELLSW…YLTQIRNALT (107 aa). The interval 649–676 is disordered; the sequence is HKDRLASVKGPRQQNMKEKEEKKDVKEE. Residues 663–676 show a composition bias toward basic and acidic residues; that stretch reads NMKEKEEKKDVKEE. In terms of domain architecture, LIM zinc-binding spans 686–748; that stretch reads EPCYFCKKHL…ELHSLAEEEE (63 aa). Residues Cys688, Cys691, His709, Cys712, Cys715, Cys718, Cys738, and His741 each coordinate Zn(2+). The tract at residues 747–1019 is disordered; that stretch reads EEGDEGHGGA…DDEDEDEEDL (273 aa). Over residues 796 to 815 the composition is skewed to acidic residues; the sequence is PDFDESTEFPAPDQDEPPDL. Residues 828-841 show a composition bias toward polar residues; sequence SAENTNMENQQHNI. Residues 910-922 are compositionally biased toward low complexity; it reads RGSSSAASTSSSS. Positions 974-987 are enriched in polar residues; that stretch reads SPWNLSSPRLQQRF. The span at 1003–1019 shows a compositional bias: acidic residues; the sequence is VSEDDNEDDEDEDEEDL. Residues 1053–1199 form the bMERB domain; the sequence is KMTEIQRFHK…EVNDQFNSSL (147 aa). The stretch at 1061–1131 forms a coiled coil; that stretch reads HKAQSIQRRL…DLMVASRQLE (71 aa). A disordered region spans residues 1194–1214; the sequence is QFNSSLDAKRRSTTASQVHWE.

Belongs to the Mical family. The cofactor is FAD.

The protein localises to the cytoplasm. It is found in the cytoskeleton. The protein resides in the midbody. It localises to the endosome membrane. The catalysed reaction is L-methionyl-[F-actin] + NADPH + O2 + H(+) = L-methionyl-(R)-S-oxide-[F-actin] + NADP(+) + H2O. The enzyme catalyses NADPH + O2 + H(+) = H2O2 + NADP(+). Functionally, monooxygenase that promotes depolymerization of F-actin by mediating oxidation of specific methionine residues on actin to form methionine-sulfoxide, resulting in actin filament disassembly and prevent repolymerization. May be involved in endosomal tubule extension and neosynthesized protein export. This is [F-actin]-monooxygenase mical1 (mical1) from Danio rerio (Zebrafish).